Reading from the N-terminus, the 215-residue chain is Glutathione S-transferase stcT (215 aa).

Positions proline 2–threonine 82 constitute a GST N-terminal domain. Residues lysine 52 and glutamate 66 each contribute to the glutathione site. Lysine 52 contacts substrate. One can recognise a GST C-terminal domain in the interval threonine 83–isoleucine 211.

It belongs to the GST superfamily. Glutathione is required as a cofactor.

It participates in mycotoxin biosynthesis; sterigmatocystin biosynthesis. In terms of biological role, glutathione S-transferase; part of the gene cluster that mediates the biosynthesis of sterigmatocystin (ST), a polyketide-derived furanocoumarin which is part of the most toxic and carcinogenic compounds among the known mycotoxins. The first step in the biosynthesis of sterigmatocystin is the production of hexanoate by the fatty acid synthase (FAS) units stcJ and stcK. The polyketide backbone is assembled by the non-reducing polyketide synthase stcA by condensation of the starter hexanoyl-CoA and 7 malonyl-CoA extender units followed by cyclization and release of norsolorinic acid. Norsolorinic acid is the first stable intermediate in the biosynthesis of sterigmatocystin and is converted into averantin (AVN) by the ketoreductase stcE which reduces the hexanoate ketone to an alcohol. Averantin is then oxidized into 5'-hydroxyaverantin (HAVN) by the cytochrome P450 monooxygenase stcF. 5'-hydroxyaverantin is further converted to 5'-oxyaverantin (OAVN) by the 5'-hydroxyaverantin dehydrogenase stcG. The next step is the conversion of OAVN into averufin (AVF) which is catalyzed by a yet to be identified enzyme. The cytochrome P450 monooxygenase stcB and the flavin-binding monooxygenase stcW are both required for the conversion of averufin to 1-hydroxyversicolorone. The esterase stcI probably catalyzes the formation of versiconal hemiacetal acetate from 1-hydroxyversicolorone. The oxydoreductase stcN then probably catalyzes the biosynthetic step from versiconal to versicolorin B (VERB). The next step is performed by the versicolorin B desaturase stcL to produce versicolorin A (VERA). The ketoreductase stcU and the cytochrome P450 monooxygenase stcS are involved in the conversion of versicolorin A to demethylsterigmatocystin. The Baeyer-Villiger oxidas stcQ and the reductase stcR might be involved in the biosynthetic step from versicolorin A to demethylsterigmatocystin. The final step in the biosynthesis of sterigmatocystin is the methylation of demethylsterigmatocystin catalyzed by the methyltransferase stcP. The sequence is that of Glutathione S-transferase stcT from Emericella nidulans (strain FGSC A4 / ATCC 38163 / CBS 112.46 / NRRL 194 / M139) (Aspergillus nidulans).